The sequence spans 363 residues: Sulfate/thiosulfate import ATP-binding protein CysA (363 aa).

The ABC transporter domain maps to Ile3–Leu237. Gly35–Thr42 is a binding site for ATP.

The protein belongs to the ABC transporter superfamily. Sulfate/tungstate importer (TC 3.A.1.6) family. In terms of assembly, the complex is composed of two ATP-binding proteins (CysA), two transmembrane proteins (CysT and CysW) and a solute-binding protein (CysP).

Its subcellular location is the cell inner membrane. The enzyme catalyses sulfate(out) + ATP + H2O = sulfate(in) + ADP + phosphate + H(+). It catalyses the reaction thiosulfate(out) + ATP + H2O = thiosulfate(in) + ADP + phosphate + H(+). Its function is as follows. Part of the ABC transporter complex CysAWTP involved in sulfate/thiosulfate import. Responsible for energy coupling to the transport system. This chain is Sulfate/thiosulfate import ATP-binding protein CysA, found in Yersinia pestis.